Consider the following 392-residue polypeptide: Casein kinase II subunit alpha (392 aa).

Residues 39–324 (YQLVRKLGRG…AREAMDHPYF (286 aa)) form the Protein kinase domain. ATP is bound by residues 45 to 53 (LGRGKYSEV) and lysine 68. Aspartate 156 functions as the Proton acceptor in the catalytic mechanism. The segment at 334 to 355 (MGGSNMPSGSSTPVSSASMMSG) is disordered. A compositionally biased stretch (low complexity) spans 337–354 (SNMPSGSSTPVSSASMMS).

The protein belongs to the protein kinase superfamily. Ser/Thr protein kinase family. CK2 subfamily. As to quaternary structure, tetramer composed of an alpha chain, an alpha' and two beta chains.

Its subcellular location is the nucleus. The catalysed reaction is L-seryl-[protein] + ATP = O-phospho-L-seryl-[protein] + ADP + H(+). It carries out the reaction L-threonyl-[protein] + ATP = O-phospho-L-threonyl-[protein] + ADP + H(+). Functionally, catalytic subunit of a constitutively active serine/threonine-protein kinase complex that phosphorylates a large number of substrates containing acidic residues C-terminal to the phosphorylated serine or threonine. Regulates numerous cellular processes, such as cell cycle progression, apoptosis and transcription, as well as viral infection. May act as a regulatory node which integrates and coordinates numerous signals leading to an appropriate cellular response. During mitosis, functions as a component of the p53/TP53-dependent spindle assembly checkpoint (SAC) that maintains cyclin-B-CDK1 activity and G2 arrest in response to spindle damage. Can also negatively regulate apoptosis. Phosphorylates the caspases CASP9 and CASP2 and the apoptotic regulator NOL3. Phosphorylation protects CASP9 from cleavage and activation by CASP8, and inhibits the dimerization of CASP2 and activation of CASP8. Plays an important role in the circadian clock function by phosphorylating BMAL1. This Xenopus laevis (African clawed frog) protein is Casein kinase II subunit alpha (csnk2a1).